The sequence spans 67 residues: Large ribosomal subunit protein bL35 (67 aa).

Belongs to the bacterial ribosomal protein bL35 family.

In Rickettsia prowazekii (strain Madrid E), this protein is Large ribosomal subunit protein bL35.